A 192-amino-acid polypeptide reads, in one-letter code: Adenylate kinase (192 aa).

10–18 (GVPGVGGTT) contributes to the ATP binding site.

Belongs to the archaeal adenylate kinase family. Monomer.

It is found in the cytoplasm. It carries out the reaction AMP + ATP = 2 ADP. This chain is Adenylate kinase (adkA), found in Methanothermococcus thermolithotrophicus (Methanococcus thermolithotrophicus).